The following is a 245-amino-acid chain: Ribonuclease PH (245 aa).

Residues Arg-86 and 124–126 (GTR) each bind phosphate.

This sequence belongs to the RNase PH family. Homohexameric ring arranged as a trimer of dimers. It has been suggested that the active form is the dimer which binds tRNA and that the hexameric form protects the substrate recognition loop (approximately residues 65-82) from proteolysis.

The catalysed reaction is tRNA(n+1) + phosphate = tRNA(n) + a ribonucleoside 5'-diphosphate. Functionally, phosphorolytic 3'-5' exoribonuclease that plays an important role in tRNA 3'-end maturation. Removes nucleotide residues following the 3'-CCA terminus of tRNAs; can also add nucleotides to the ends of RNA molecules by using nucleoside diphosphates as substrates, but this may not be physiologically important. Probably plays a role in initiation of 16S rRNA degradation (leading to ribosome degradation) during starvation. Plays a role in the secondary pathway of 23S rRNA 3' end maturation. This Bacillus subtilis (strain 168) protein is Ribonuclease PH.